A 115-amino-acid polypeptide reads, in one-letter code: uncharacterized protein (115 aa).

This is an uncharacterized protein from Gallus gallus (Chicken).